We begin with the raw amino-acid sequence, 171 residues long: 3-hydroxydecanoyl-[acyl-carrier-protein] dehydratase (171 aa).

The active site involves His70.

The protein belongs to the thioester dehydratase family. FabA subfamily. In terms of assembly, homodimer.

It localises to the cytoplasm. It catalyses the reaction a (3R)-hydroxyacyl-[ACP] = a (2E)-enoyl-[ACP] + H2O. The catalysed reaction is (3R)-hydroxydecanoyl-[ACP] = (2E)-decenoyl-[ACP] + H2O. The enzyme catalyses (2E)-decenoyl-[ACP] = (3Z)-decenoyl-[ACP]. It functions in the pathway lipid metabolism; fatty acid biosynthesis. Necessary for the introduction of cis unsaturation into fatty acids. Catalyzes the dehydration of (3R)-3-hydroxydecanoyl-ACP to E-(2)-decenoyl-ACP and then its isomerization to Z-(3)-decenoyl-ACP. Can catalyze the dehydratase reaction for beta-hydroxyacyl-ACPs with saturated chain lengths up to 16:0, being most active on intermediate chain length. The polypeptide is 3-hydroxydecanoyl-[acyl-carrier-protein] dehydratase (Xanthomonas oryzae pv. oryzae (strain MAFF 311018)).